The chain runs to 184 residues: Photosystem I assembly protein Ycf4 (184 aa).

Transmembrane regions (helical) follow at residues 22 to 42 (VCWA…GTSS) and 57 to 77 (IIFF…LFIS).

It belongs to the Ycf4 family.

The protein localises to the plastid. The protein resides in the chloroplast thylakoid membrane. In terms of biological role, seems to be required for the assembly of the photosystem I complex. This is Photosystem I assembly protein Ycf4 from Morus indica (Mulberry).